Reading from the N-terminus, the 95-residue chain is Cell division protein FtsB (95 aa).

Residues 1 to 3 (MRL) are Cytoplasmic-facing. A helical membrane pass occupies residues 4–21 (FILILSAILLLFQYDLWF). The Periplasmic portion of the chain corresponds to 22-95 (GKNGYLDYKE…RIAKENKDNR (74 aa)). The stretch at 28–62 (DYKETAEEIAMHKAENTKLSQRNQVVAAEIRDLKD) forms a coiled coil.

The protein belongs to the FtsB family. Part of a complex composed of FtsB, FtsL and FtsQ.

The protein resides in the cell inner membrane. In terms of biological role, essential cell division protein. May link together the upstream cell division proteins, which are predominantly cytoplasmic, with the downstream cell division proteins, which are predominantly periplasmic. This Mannheimia succiniciproducens (strain KCTC 0769BP / MBEL55E) protein is Cell division protein FtsB.